Reading from the N-terminus, the 234-residue chain is MIRPLIIALDVENRQNMQELLKTLPKPLFVKVGMELFYSEGPAVIEQLKDEGHQVFLDLKLHDIPNTVKRAMRQLATLGVDIVNVHVAGGVNMMAAAREGLEAGTVDGRNRPKLIGVTQLTSTNEAMLQKELLIQSNMNGAVSHYARLAKEAGLDGVVSSAQEVPIIHEHCGPSFLTVTPGIRLKEDDKGDQTRIVTPEEARTLGSWAIVVGRSITAAPDPAAAYEIIRKQWEG.

Substrate is bound by residues Asp10, Lys31, 58 to 67, Thr121, Arg183, Gln192, Gly212, and Arg213; that span reads DLKLHDIPNT. Lys60 acts as the Proton donor in catalysis.

Belongs to the OMP decarboxylase family. Type 1 subfamily. As to quaternary structure, homodimer.

It catalyses the reaction orotidine 5'-phosphate + H(+) = UMP + CO2. It functions in the pathway pyrimidine metabolism; UMP biosynthesis via de novo pathway; UMP from orotate: step 2/2. Catalyzes the decarboxylation of orotidine 5'-monophosphate (OMP) to uridine 5'-monophosphate (UMP). This Halalkalibacterium halodurans (strain ATCC BAA-125 / DSM 18197 / FERM 7344 / JCM 9153 / C-125) (Bacillus halodurans) protein is Orotidine 5'-phosphate decarboxylase.